The sequence spans 531 residues: Laccase-4 (531 aa).

Positions M1–F19 are cleaved as a signal peptide. 3 consecutive Plastocyanin-like domains span residues R23–Y146, V158–E315, and S384–R507. N-linked (GlcNAc...) asparagine glycosylation is present at N66. 2 residues coordinate Cu cation: H83 and H85. C104 and C528 are disulfide-bonded. A glycan (N-linked (GlcNAc...) asparagine) is linked at N109. Residues H128 and H130 each coordinate Cu cation. 4 N-linked (GlcNAc...) asparagine glycosylation sites follow: N186, N231, N280, and N395. Positions 427, 430, 432, 479, 480, and 481 each coordinate Cu cation.

Belongs to the multicopper oxidase family. As to quaternary structure, homodimer. Requires Cu cation as cofactor. In terms of tissue distribution, in mycelia, at a higher level than LCC1, LCC2 and LCC3.

The protein resides in the secreted. The catalysed reaction is 4 hydroquinone + O2 = 4 benzosemiquinone + 2 H2O. Lignin degradation and detoxification of lignin-derived products. This is Laccase-4 (LCC4) from Thanatephorus cucumeris (Black scurf of potato).